A 503-amino-acid polypeptide reads, in one-letter code: AMP phosphorylase (503 aa).

AMP contacts are provided by residues Gly168, 194–199 (SRAITG), and Ser203. Residue Asp256 is the Proton donor of the active site. Residues Ser264 and Lys288 each contribute to the AMP site.

It belongs to the thymidine/pyrimidine-nucleoside phosphorylase family. Type 2 subfamily.

It carries out the reaction AMP + phosphate = alpha-D-ribose 1,5-bisphosphate + adenine. It catalyses the reaction CMP + phosphate = cytosine + alpha-D-ribose 1,5-bisphosphate. The catalysed reaction is UMP + phosphate = alpha-D-ribose 1,5-bisphosphate + uracil. Its function is as follows. Catalyzes the conversion of AMP and phosphate to adenine and ribose 1,5-bisphosphate (R15P). Exhibits phosphorylase activity toward CMP and UMP in addition to AMP. Functions in an archaeal AMP degradation pathway, together with R15P isomerase and RubisCO. This chain is AMP phosphorylase, found in Methanocella arvoryzae (strain DSM 22066 / NBRC 105507 / MRE50).